A 1370-amino-acid polypeptide reads, in one-letter code: DNA-directed RNA polymerase subunit beta (1370 aa).

It belongs to the RNA polymerase beta chain family. The RNAP catalytic core consists of 2 alpha, 1 beta, 1 beta' and 1 omega subunit. When a sigma factor is associated with the core the holoenzyme is formed, which can initiate transcription.

The enzyme catalyses RNA(n) + a ribonucleoside 5'-triphosphate = RNA(n+1) + diphosphate. In terms of biological role, DNA-dependent RNA polymerase catalyzes the transcription of DNA into RNA using the four ribonucleoside triphosphates as substrates. The polypeptide is DNA-directed RNA polymerase subunit beta (Verminephrobacter eiseniae (strain EF01-2)).